The chain runs to 617 residues: mRNA-decapping enzyme 1B (617 aa).

The residue at position 2 (A2) is an N-acetylalanine. S147 is modified (phosphoserine). Position 191 is a phosphotyrosine (Y191). 2 disordered regions span residues 195–222 (NLIK…LDPE) and 243–266 (TVEP…KLPI). Residues 205-219 (SENQQQRIPQPNQTL) show a composition bias toward polar residues. Low complexity predominate over residues 252-261 (QQQQQQQQQQ). S275 and S336 each carry phosphoserine. A disordered region spans residues 362-426 (TPGAANKCDP…VGHQAHGREQ (65 aa)). The segment covering 371–381 (PSTPAPASSAA) has biased composition (low complexity). At T392 the chain carries Phosphothreonine. Phosphoserine is present on residues S448 and S511.

Belongs to the DCP1 family. In terms of assembly, interacts with DCP1A. As to quaternary structure, (Microbial infection) Interacts with rotavirus A non-structural protein 2; this interaction probably plays a role in the sequestration of DCP1B in viral factories. Interacts with rotavirus A non-structural protein 5; this interaction probably plays a role in its sequestration in viral factories.

It localises to the cytoplasm. The protein localises to the nucleus. The enzyme catalyses a 5'-end (N(7)-methyl 5'-triphosphoguanosine)-ribonucleoside in mRNA + H2O = N(7)-methyl-GDP + a 5'-end phospho-ribonucleoside in mRNA + 2 H(+). In terms of biological role, may play a role in the degradation of mRNAs, both in normal mRNA turnover and in nonsense-mediated mRNA decay. May remove the 7-methyl guanine cap structure from mRNA molecules, yielding a 5'-phosphorylated mRNA fragment and 7m-GDP. This is mRNA-decapping enzyme 1B (DCP1B) from Homo sapiens (Human).